The primary structure comprises 110 residues: Large ribosomal subunit protein uL22 (110 aa).

Residues 85-95 show a composition bias toward basic residues; that stretch reads RGTASKIRKPT. Residues 85–110 are disordered; it reads RGTASKIRKPTSHVMVEVSKAQKKEA.

This sequence belongs to the universal ribosomal protein uL22 family. Part of the 50S ribosomal subunit.

In terms of biological role, this protein binds specifically to 23S rRNA; its binding is stimulated by other ribosomal proteins, e.g. L4, L17, and L20. It is important during the early stages of 50S assembly. It makes multiple contacts with different domains of the 23S rRNA in the assembled 50S subunit and ribosome. Functionally, the globular domain of the protein is located near the polypeptide exit tunnel on the outside of the subunit, while an extended beta-hairpin is found that lines the wall of the exit tunnel in the center of the 70S ribosome. The chain is Large ribosomal subunit protein uL22 from Campylobacter curvus (strain 525.92).